We begin with the raw amino-acid sequence, 117 residues long: Hydrogenase maturation factor HypA (117 aa).

Position 2 (His-2) interacts with Ni(2+). Cys-73, Cys-76, Cys-89, and Cys-92 together coordinate Zn(2+).

The protein belongs to the HypA/HybF family.

Its function is as follows. Involved in the maturation of [NiFe] hydrogenases. Required for nickel insertion into the metal center of the hydrogenase. This Pelodictyon phaeoclathratiforme (strain DSM 5477 / BU-1) protein is Hydrogenase maturation factor HypA.